The sequence spans 523 residues: Lysine--tRNA ligase (523 aa).

The short motif at 30-38 (PSGYVHVGN) is the 'HIGH' region element. Residues aspartate 95, cysteine 99, histidine 100, histidine 106, cysteine 177, histidine 180, cysteine 199, and histidine 203 each coordinate Zn(2+). The 'KMSKS' region motif lies at 279–283 (KMSGS).

Belongs to the class-I aminoacyl-tRNA synthetase family. Zn(2+) is required as a cofactor.

It localises to the cytoplasm. The catalysed reaction is tRNA(Lys) + L-lysine + ATP = L-lysyl-tRNA(Lys) + AMP + diphosphate. The sequence is that of Lysine--tRNA ligase (lysS) from Pyrococcus horikoshii (strain ATCC 700860 / DSM 12428 / JCM 9974 / NBRC 100139 / OT-3).